The primary structure comprises 312 residues: Nucleosome assembly protein 1-like 4 (312 aa).

Positions 24–78 form a coiled coil; it reads VETLKNKLQALAEQHVDVLESLAPSVRKRVDVLMEIQSQHDELEVKFFEEKAALE. The Nuclear export signal motif lies at 45–60; the sequence is LAPSVRKRVDVLMEIQ. The interval 289–312 is disordered; the sequence is DYGASWVDDEEEDDNNDEYSDEEA.

This sequence belongs to the nucleosome assembly protein (NAP) family.

The protein resides in the nucleus. It localises to the cytoplasm. In terms of biological role, may modulate chromatin structure by regulation of nucleosome assembly/disassembly. This chain is Nucleosome assembly protein 1-like 4, found in Oryza sativa subsp. japonica (Rice).